Here is a 274-residue protein sequence, read N- to C-terminus: Thiamine kinase (274 aa).

This sequence belongs to the thiamine kinase family.

The catalysed reaction is thiamine + ATP = thiamine phosphate + ADP + H(+). It participates in cofactor biosynthesis; thiamine diphosphate biosynthesis; thiamine phosphate from thiamine: step 1/1. In terms of biological role, catalyzes the ATP-dependent phosphorylation of thiamine to thiamine phosphate. Is involved in thiamine salvage. This chain is Thiamine kinase, found in Shigella boydii serotype 4 (strain Sb227).